The following is a 214-amino-acid chain: Protein OPG176 (214 aa).

Belongs to the orthopoxvirus OPG176 family. Tetramer. Interacts with host MYD88, TRF4, TICAM2 and MAL.

Its function is as follows. BCL2-like protein which disrupts the host immune response by inhibiting the TLR4 signaling pathway leading to NF-kappa-B activation. Acts close to the plasma membrane and targets several host TIR-domain containing adapter proteins including MYD88, TIRAP, TRIF and TICAM2. In turn, blocks the host NF-kappa-B and TRIF-mediated IRF3 activation. This is Protein OPG176 (OPG176) from Homo sapiens (Human).